A 332-amino-acid polypeptide reads, in one-letter code: Malate dehydrogenase (332 aa).

Gly15 to Gly21 lines the NAD(+) pocket. Arg96 and Arg102 together coordinate substrate. NAD(+) contacts are provided by residues Asn109 and Val133–Asn135. Substrate is bound by residues Asn135 and Arg166. The Proton acceptor role is filled by His191.

The protein belongs to the LDH/MDH superfamily. MDH type 2 family.

It carries out the reaction (S)-malate + NAD(+) = oxaloacetate + NADH + H(+). Catalyzes the reversible oxidation of malate to oxaloacetate. The polypeptide is Malate dehydrogenase (Mycolicibacterium vanbaalenii (strain DSM 7251 / JCM 13017 / BCRC 16820 / KCTC 9966 / NRRL B-24157 / PYR-1) (Mycobacterium vanbaalenii)).